Consider the following 150-residue polypeptide: Snaclec CTL-Eoc125 (150 aa).

An N-terminal signal peptide occupies residues 1–23 (MGRFISVSFGLLVVFLSLSGIGA). 3 cysteine pairs are disulfide-bonded: cysteine 27–cysteine 38, cysteine 55–cysteine 144, and cysteine 121–cysteine 136. The C-type lectin domain maps to 34–145 (YEGHCYKVFS…CSSTQQFICK (112 aa)).

Belongs to the snaclec family. As to quaternary structure, heterodimer; disulfide-linked. In terms of tissue distribution, expressed by the venom gland.

It localises to the secreted. Its function is as follows. Interferes with one step of hemostasis (modulation of platelet aggregation, or coagulation cascade, for example). The protein is Snaclec CTL-Eoc125 of Echis ocellatus (Ocellated saw-scaled viper).